The following is a 119-amino-acid chain: Large ribosomal subunit protein bL20 (119 aa).

The protein belongs to the bacterial ribosomal protein bL20 family.

Functionally, binds directly to 23S ribosomal RNA and is necessary for the in vitro assembly process of the 50S ribosomal subunit. It is not involved in the protein synthesizing functions of that subunit. The chain is Large ribosomal subunit protein bL20 from Bordetella avium (strain 197N).